Reading from the N-terminus, the 468-residue chain is FAD-linked oxidoreductase azaG (468 aa).

The first 16 residues, Met-1–Ala-16, serve as a signal peptide directing secretion. Asn-44 carries an N-linked (GlcNAc...) asparagine glycan. Residues Thr-54–Ala-228 enclose the FAD-binding PCMH-type domain. N-linked (GlcNAc...) asparagine glycosylation is found at Asn-272, Asn-348, and Asn-464.

This sequence belongs to the oxygen-dependent FAD-linked oxidoreductase family. Requires FAD as cofactor.

It functions in the pathway secondary metabolite biosynthesis. Its function is as follows. FAD-linked oxidoreductase; part of the gene cluster that mediates the biosynthesis of azaphilones, a class of fungal metabolites characterized by a highly oxygenated pyrano-quinone bicyclic core and exhibiting a broad range of bioactivities. In the first step, the non-reducing polyketide synthase azaA forms the hexaketide precursor from successive condensations of five malonyl-CoA units, presumably with a simple acetyl-CoA starter unit. The reactive polyketide chain then undergoes a PT-mediated C2-C7 cyclization to afford the aromatic ring and is eventually released as an aldehyde through the R-domain. The putative ketoreductase azaE is proposed to catalyze the reduction of the terminal ketone resulting in the early culture product FK17-P2a. The monooxygenase azaH was demonstrated to be the only enzyme required to convert FK17-P2a to azanigerone E. AzaH first hydroxylates the benzaldehyde intermediate FK17-P2a at C4, which triggers the formation of the pyran-ring to afford azanigerone E. In parallel, the 2,4-dimethylhexanoyl chain is synthesized by the HR-PKS azaB and is proposed to be transferred to the C4-hydroxyl of azanigerone E by the acyltransferase azaD directly from the ACP domain of azaB. Alternatively, the 2,4-dimethyl-hexanoyl chain may be offloaded from the HR-PKS as a carboxylic acid and converted to an acyl-CoA by azaF. The resulting acyl-CoA molecule could then be taken up as a substrate by AzaD to form azanigerone B. To yield the carboxylic acid substituent in azanigerone A, the hydroxypropyl side chain of azanigerone B would need to undergo a C-C oxidative cleavage catalyzed by cytochrome P450 AzaI. AzaI is proposed to act on a vicinal diol that leads to a C-C bond scission either through an alkoxyradical intermediate or a peroxy complex. In the biosynthesis of azanigerone A, azanigerone B first undergoes hydroxylation at C10, possibly catalyzed by one of the two FAD-dependent monooxygenases encoded in the cluster, azaG or azaL, resulting in the vicinal diol azanigerone C. Oxidative cleavage of azanigerone C by azaI would yield the corresponding aldehyde derivative of azanigerone A. Finally, the dehydrogenase azaJ is proposed to convert the aldehyde functional group into the carboxylic acid, completing the conversion from azanigerone B to azanigerone A. Alternatively, the oxidation of aldehyde to carboxylic acid may be catalyzed by the same P450 enzyme azaI via consecutive oxidation or by endogenous alcohol dehydrogenase. The chain is FAD-linked oxidoreductase azaG from Aspergillus niger (strain ATCC 1015 / CBS 113.46 / FGSC A1144 / LSHB Ac4 / NCTC 3858a / NRRL 328 / USDA 3528.7).